The sequence spans 262 residues: Acyl-[acyl-carrier-protein]--UDP-N-acetylglucosamine O-acyltransferase (262 aa).

Belongs to the transferase hexapeptide repeat family. LpxA subfamily. As to quaternary structure, homotrimer.

It is found in the cytoplasm. The catalysed reaction is a (3R)-hydroxyacyl-[ACP] + UDP-N-acetyl-alpha-D-glucosamine = a UDP-3-O-[(3R)-3-hydroxyacyl]-N-acetyl-alpha-D-glucosamine + holo-[ACP]. It participates in glycolipid biosynthesis; lipid IV(A) biosynthesis; lipid IV(A) from (3R)-3-hydroxytetradecanoyl-[acyl-carrier-protein] and UDP-N-acetyl-alpha-D-glucosamine: step 1/6. In terms of biological role, involved in the biosynthesis of lipid A, a phosphorylated glycolipid that anchors the lipopolysaccharide to the outer membrane of the cell. The sequence is that of Acyl-[acyl-carrier-protein]--UDP-N-acetylglucosamine O-acyltransferase from Cronobacter sakazakii (strain ATCC BAA-894) (Enterobacter sakazakii).